The following is a 118-amino-acid chain: Small ribosomal subunit protein uS13 (118 aa).

The tract at residues 94 to 118 is disordered; that stretch reads SLPLRGQRTKTNARTRKGPRKPIRK.

It belongs to the universal ribosomal protein uS13 family. In terms of assembly, part of the 30S ribosomal subunit. Forms a loose heterodimer with protein S19. Forms two bridges to the 50S subunit in the 70S ribosome.

Located at the top of the head of the 30S subunit, it contacts several helices of the 16S rRNA. In the 70S ribosome it contacts the 23S rRNA (bridge B1a) and protein L5 of the 50S subunit (bridge B1b), connecting the 2 subunits; these bridges are implicated in subunit movement. Contacts the tRNAs in the A and P-sites. This Shewanella violacea (strain JCM 10179 / CIP 106290 / LMG 19151 / DSS12) protein is Small ribosomal subunit protein uS13.